Consider the following 474-residue polypeptide: Cysteine--tRNA ligase (474 aa).

Cysteine 27 contacts Zn(2+). Residues 29–39 (PTVYNYIHIGN) carry the 'HIGH' region motif. Zn(2+) contacts are provided by cysteine 212, histidine 237, and glutamate 241. The short motif at 271 to 275 (KMSKS) is the 'KMSKS' region element. ATP is bound at residue lysine 274.

Belongs to the class-I aminoacyl-tRNA synthetase family. In terms of assembly, monomer. It depends on Zn(2+) as a cofactor.

It localises to the cytoplasm. It catalyses the reaction tRNA(Cys) + L-cysteine + ATP = L-cysteinyl-tRNA(Cys) + AMP + diphosphate. The sequence is that of Cysteine--tRNA ligase from Lactobacillus delbrueckii subsp. bulgaricus (strain ATCC 11842 / DSM 20081 / BCRC 10696 / JCM 1002 / NBRC 13953 / NCIMB 11778 / NCTC 12712 / WDCM 00102 / Lb 14).